We begin with the raw amino-acid sequence, 339 residues long: Dicamba O-demethylase, oxygenase component (339 aa).

The region spanning W8–I110 is the Rieske domain. [2Fe-2S] cluster contacts are provided by C48, H50, C67, and H70. Residues H159 and H164 each contribute to the Fe cation site. The 3,6-dichloro-2-methoxybenzoate site is built by N229, H250, and W284. Position 293 (D293) interacts with Fe cation.

As to quaternary structure, homotrimer. The dicamba O-demethylase multicomponent enzyme system is composed of an oxygenase component (DdmC) and an electron transfer component formed by a ferredoxin reductase (DdmA) and a ferredoxin (DdmB). In vitro, dicamba O-demethylase assays in which DdmA2 is substituted for DdmA1 demonstrate that the two enzymes possess nearly identical activities. The cofactor is [2Fe-2S] cluster.

The enzyme catalyses 3,6-dichloro-2-methoxybenzoate + 2 reduced [2Fe-2S]-[ferredoxin] + O2 + 2 H(+) = 3,6-dichlorosalicylate + formaldehyde + 2 oxidized [2Fe-2S]-[ferredoxin] + H2O. With respect to regulation, activity enhanced by Fe(2+) and Mg(2+) ions. Its function is as follows. Component of the dicamba O-demethylase multicomponent enzyme system involved in the degradation of the herbicide dicamba. In vitro, catalyzes the O-demethylation of 2-methoxy-3,6-dichlorobenzoic acid (dicamba) to yield 3,6-dichlorosalicylic acid (DCSA) via an exocyclic monooxygenation. This Stenotrophomonas maltophilia (Pseudomonas maltophilia) protein is Dicamba O-demethylase, oxygenase component.